A 61-amino-acid chain; its full sequence is Photosystem II reaction center protein K (61 aa).

Positions 1 to 24 (MPNILSLTCICFNSVIYPTSFFFA) are excised as a propeptide. The helical transmembrane segment at 32-52 (IFNPIVDFMPVIPLFFFLLAF) threads the bilayer.

Belongs to the PsbK family. As to quaternary structure, PSII is composed of 1 copy each of membrane proteins PsbA, PsbB, PsbC, PsbD, PsbE, PsbF, PsbH, PsbI, PsbJ, PsbK, PsbL, PsbM, PsbT, PsbX, PsbY, PsbZ, Psb30/Ycf12, at least 3 peripheral proteins of the oxygen-evolving complex and a large number of cofactors. It forms dimeric complexes.

It is found in the plastid. The protein resides in the chloroplast thylakoid membrane. One of the components of the core complex of photosystem II (PSII). PSII is a light-driven water:plastoquinone oxidoreductase that uses light energy to abstract electrons from H(2)O, generating O(2) and a proton gradient subsequently used for ATP formation. It consists of a core antenna complex that captures photons, and an electron transfer chain that converts photonic excitation into a charge separation. This Triticum aestivum (Wheat) protein is Photosystem II reaction center protein K.